The primary structure comprises 75 residues: Protein Tlp homolog (75 aa).

This sequence belongs to the Tlp family.

In Clostridium acetobutylicum (strain ATCC 824 / DSM 792 / JCM 1419 / IAM 19013 / LMG 5710 / NBRC 13948 / NRRL B-527 / VKM B-1787 / 2291 / W), this protein is Protein Tlp homolog.